The primary structure comprises 934 residues: Phosphoenolpyruvate carboxylase (934 aa).

Residues histidine 161 and lysine 593 contribute to the active site.

The protein belongs to the PEPCase type 1 family. Mg(2+) serves as cofactor.

It carries out the reaction oxaloacetate + phosphate = phosphoenolpyruvate + hydrogencarbonate. In terms of biological role, forms oxaloacetate, a four-carbon dicarboxylic acid source for the tricarboxylic acid cycle. In Mycobacterium leprae (strain TN), this protein is Phosphoenolpyruvate carboxylase (ppc).